A 250-amino-acid polypeptide reads, in one-letter code: Acetylglutamate kinase (250 aa).

Substrate contacts are provided by residues 41-42 (GG), Arg63, and Asn156.

This sequence belongs to the acetylglutamate kinase family. ArgB subfamily.

Its subcellular location is the cytoplasm. The catalysed reaction is N-acetyl-L-glutamate + ATP = N-acetyl-L-glutamyl 5-phosphate + ADP. The protein operates within amino-acid biosynthesis; L-arginine biosynthesis; N(2)-acetyl-L-ornithine from L-glutamate: step 2/4. Catalyzes the ATP-dependent phosphorylation of N-acetyl-L-glutamate. This is Acetylglutamate kinase from Listeria monocytogenes serovar 1/2a (strain ATCC BAA-679 / EGD-e).